A 212-amino-acid chain; its full sequence is Molybdenum cofactor guanylyltransferase (212 aa).

Residues 14–16 (LAG), lysine 27, asparagine 55, aspartate 73, and aspartate 108 each bind GTP. Aspartate 108 is a Mg(2+) binding site.

The protein belongs to the MobA family. In terms of assembly, monomer. It depends on Mg(2+) as a cofactor.

It is found in the cytoplasm. The catalysed reaction is Mo-molybdopterin + GTP + H(+) = Mo-molybdopterin guanine dinucleotide + diphosphate. Functionally, transfers a GMP moiety from GTP to Mo-molybdopterin (Mo-MPT) cofactor (Moco or molybdenum cofactor) to form Mo-molybdopterin guanine dinucleotide (Mo-MGD) cofactor. This Bradyrhizobium sp. (strain ORS 278) protein is Molybdenum cofactor guanylyltransferase.